A 443-amino-acid chain; its full sequence is Tol-Pal system protein TolB (443 aa).

The signal sequence occupies residues 1-33; it reads MKIGIINTKIRTVFSAFACMIAASLVCTMPARA.

This sequence belongs to the TolB family. As to quaternary structure, the Tol-Pal system is composed of five core proteins: the inner membrane proteins TolA, TolQ and TolR, the periplasmic protein TolB and the outer membrane protein Pal. They form a network linking the inner and outer membranes and the peptidoglycan layer.

It is found in the periplasm. Part of the Tol-Pal system, which plays a role in outer membrane invagination during cell division and is important for maintaining outer membrane integrity. The polypeptide is Tol-Pal system protein TolB (Brucella ovis (strain ATCC 25840 / 63/290 / NCTC 10512)).